A 97-amino-acid polypeptide reads, in one-letter code: MEIKKSYKDYKKLVWNVSTEFTQALARIMFFYIVNDLETAKNLAKITSPYLPKVPSKLLKELSEAIEEEIKAKSDIEKEKAKEKVKKAFVKLFYYTV.

This is an uncharacterized protein from Methanocaldococcus jannaschii (strain ATCC 43067 / DSM 2661 / JAL-1 / JCM 10045 / NBRC 100440) (Methanococcus jannaschii).